The following is a 145-amino-acid chain: Transcription antitermination protein NusB (145 aa).

Belongs to the NusB family.

Involved in transcription antitermination. Required for transcription of ribosomal RNA (rRNA) genes. Binds specifically to the boxA antiterminator sequence of the ribosomal RNA (rrn) operons. This Geotalea uraniireducens (strain Rf4) (Geobacter uraniireducens) protein is Transcription antitermination protein NusB.